The primary structure comprises 272 residues: Golgi to ER traffic protein 5 (272 aa).

Disordered regions lie at residues 1 to 35 (MSTV…HSGT) and 85 to 105 (LHAP…PGSS). A Ubiquitin-like domain is found at 108–198 (ITVHLKSARN…VEFGVMIIGG (91 aa)). A disordered region spans residues 212–231 (SAEQKESYEPPKPAVGPSGE).

The protein belongs to the GET5 family. Forms homodimers via its C-terminal domain. Component of the get4/get5/sgt2 sorting complex. Binds directly sgt12 homodimers.

Its subcellular location is the cytoplasm. Functionally, component of the get4/get5/sgt2 sorting complex involved in the GET (guided entry of TA proteins) pathway that leads to the insertion of tail-anchored (TA) proteins into the endoplasmic reticulum. Get4 and get5 form an obligate complex that catalyzes the transfer of tail-anchored proteins destined to the endoplasmic reticulum from sgt2 to the cytosolic targeting factor which then targets the TA protein to the ER membrane via get1/get2. The protein is Golgi to ER traffic protein 5 of Aspergillus fumigatus (strain ATCC MYA-4609 / CBS 101355 / FGSC A1100 / Af293) (Neosartorya fumigata).